We begin with the raw amino-acid sequence, 475 residues long: Probable UDP-N-acetylglucosamine pyrophosphorylase (475 aa).

Residues Leu103–Gly106 carry the Substrate binding motif. Residues Leu103–Gly106, Lys117, Gln194, and Gly220 each bind UTP. Residue Asn221 coordinates substrate. Asp251 is a binding site for UTP. The Substrate binding signature appears at Glu301–Tyr302. Lys378 provides a ligand contact to UTP. Ser405 carries the phosphoserine modification. Lys410 lines the substrate pocket.

This sequence belongs to the UDPGP type 1 family.

The protein localises to the cytoplasm. It localises to the nucleus. The catalysed reaction is N-acetyl-alpha-D-glucosamine 1-phosphate + UTP + H(+) = UDP-N-acetyl-alpha-D-glucosamine + diphosphate. The protein operates within nucleotide-sugar biosynthesis; UDP-N-acetyl-alpha-D-glucosamine biosynthesis; UDP-N-acetyl-alpha-D-glucosamine from N-acetyl-alpha-D-glucosamine 1-phosphate: step 1/1. In Schizosaccharomyces pombe (strain 972 / ATCC 24843) (Fission yeast), this protein is Probable UDP-N-acetylglucosamine pyrophosphorylase (uap1).